We begin with the raw amino-acid sequence, 388 residues long: DNA replication and repair protein RecF (388 aa).

30–37 (GNNAQGKS) provides a ligand contact to ATP.

Belongs to the RecF family.

Its subcellular location is the cytoplasm. Its function is as follows. The RecF protein is involved in DNA metabolism; it is required for DNA replication and normal SOS inducibility. RecF binds preferentially to single-stranded, linear DNA. It also seems to bind ATP. The polypeptide is DNA replication and repair protein RecF (Picosynechococcus sp. (strain ATCC 27264 / PCC 7002 / PR-6) (Agmenellum quadruplicatum)).